A 272-amino-acid polypeptide reads, in one-letter code: Putative pyruvate, phosphate dikinase regulatory protein (272 aa).

147-154 (GLSRTSKT) provides a ligand contact to ADP.

It belongs to the pyruvate, phosphate/water dikinase regulatory protein family. PDRP subfamily.

The enzyme catalyses N(tele)-phospho-L-histidyl/L-threonyl-[pyruvate, phosphate dikinase] + ADP = N(tele)-phospho-L-histidyl/O-phospho-L-threonyl-[pyruvate, phosphate dikinase] + AMP + H(+). The catalysed reaction is N(tele)-phospho-L-histidyl/O-phospho-L-threonyl-[pyruvate, phosphate dikinase] + phosphate + H(+) = N(tele)-phospho-L-histidyl/L-threonyl-[pyruvate, phosphate dikinase] + diphosphate. Functionally, bifunctional serine/threonine kinase and phosphorylase involved in the regulation of the pyruvate, phosphate dikinase (PPDK) by catalyzing its phosphorylation/dephosphorylation. The protein is Putative pyruvate, phosphate dikinase regulatory protein of Clostridium botulinum (strain Alaska E43 / Type E3).